A 105-amino-acid polypeptide reads, in one-letter code: MICOS complex subunit Mic10 (105 aa).

The helical transmembrane segment at 29 to 46 (LLKVTGGVAIGIVASVAF) threads the bilayer. Residues 47–105 (FKSRSWPIWFGSGVGLGTGWSNCRHDFASPYVLHGKRVPAGQDSQGKPAYNIITEQHKQ) lie on the Mitochondrial intermembrane side of the membrane. A disordered region spans residues 85 to 105 (PAGQDSQGKPAYNIITEQHKQ).

The protein belongs to the MICOS complex subunit Mic10 family. In terms of assembly, component of the mitochondrial contact site and cristae organizing system (MICOS) complex.

It localises to the mitochondrion inner membrane. Functionally, component of the MICOS complex, a large protein complex of the mitochondrial inner membrane that plays crucial roles in the maintenance of crista junctions, inner membrane architecture, and formation of contact sites to the outer membrane. The sequence is that of MICOS complex subunit Mic10 from Caenorhabditis elegans.